The following is a 233-amino-acid chain: Large ribosomal subunit protein uL1 (233 aa).

Belongs to the universal ribosomal protein uL1 family. As to quaternary structure, part of the 50S ribosomal subunit.

Functionally, binds directly to 23S rRNA. The L1 stalk is quite mobile in the ribosome, and is involved in E site tRNA release. Protein L1 is also a translational repressor protein, it controls the translation of the L11 operon by binding to its mRNA. The protein is Large ribosomal subunit protein uL1 of Proteus mirabilis (strain HI4320).